Here is a 263-residue protein sequence, read N- to C-terminus: MNISRVLFAVVLVLTVSTYECRPRGRILGGQDSKEKTWPFMASIQKNEVHQCGGVLISDKWVLSAAHCATDSNNSSLHVMLGAISLTKPEQYKIVLKVEREIPHPLYNSTKKHHDLLLLELSEKVTLSEAVKPLPFETENIDIPDGKRCLVAGWGQMKSTGKKPDTLQELWIPVISRDVCNRRNYYDNEITPNMICAIEAKKDSCEGDSGGPLVCDGIAVAIVQGGYRRCGLSKKPGIYTLIAPYKSWIMETMYNATLLPSPL.

The N-terminal stretch at 1 to 21 (MNISRVLFAVVLVLTVSTYEC) is a signal peptide. N2 carries N-linked (GlcNAc...) asparagine glycosylation. Positions 22–26 (RPRGR) are cleaved as a propeptide — activation peptide. The 228-residue stretch at 27 to 254 (ILGGQDSKEK…YKSWIMETMY (228 aa)) folds into the Peptidase S1 domain. C52 and C68 are joined by a disulfide. H67 serves as the catalytic Charge relay system. N73, N74, and N108 each carry an N-linked (GlcNAc...) asparagine glycan. The active-site Charge relay system is the D115. Intrachain disulfides connect C149-C215, C180-C196, and C205-C230. The Charge relay system role is filled by S209. N255 carries an N-linked (GlcNAc...) asparagine glycan.

The protein belongs to the peptidase S1 family. In the embryo, localizes to paraxial regions at the neurula stage and anterior ventral regions at the tailbud stage. From the late tailbud to tadpole stage, expressed along the forming blood vessels including the anterior cardinal veins, posterior cardinal veins, intersomitic veins, dorsal longitudinal anastomosing vessel, dorsal aorta, pronephric sinus and most prominently around the vascular vitelline network, where expression shows left-right asymmetry in the stage 42 embryo. Localizes to endothelial cells. In adults, shows highest expression in liver with moderate levels of expression in the fat body, lung, gut and vessels. Weakly expressed in adult heart, muscle, testis and ovary.

It is found in the secreted. Functionally, probable serine protease. This is Serine protease ami from Xenopus laevis (African clawed frog).